A 306-amino-acid polypeptide reads, in one-letter code: Porphobilinogen deaminase (306 aa).

Residue Cys237 is modified to S-(dipyrrolylmethanemethyl)cysteine.

Belongs to the HMBS family. Monomer. Dipyrromethane serves as cofactor.

The catalysed reaction is 4 porphobilinogen + H2O = hydroxymethylbilane + 4 NH4(+). It functions in the pathway porphyrin-containing compound metabolism; protoporphyrin-IX biosynthesis; coproporphyrinogen-III from 5-aminolevulinate: step 2/4. In terms of biological role, tetrapolymerization of the monopyrrole PBG into the hydroxymethylbilane pre-uroporphyrinogen in several discrete steps. The polypeptide is Porphobilinogen deaminase (Syntrophus aciditrophicus (strain SB)).